The sequence spans 422 residues: Histidine--tRNA ligase (422 aa).

It belongs to the class-II aminoacyl-tRNA synthetase family. In terms of assembly, homodimer.

The protein localises to the cytoplasm. It carries out the reaction tRNA(His) + L-histidine + ATP = L-histidyl-tRNA(His) + AMP + diphosphate + H(+). This chain is Histidine--tRNA ligase, found in Onion yellows phytoplasma (strain OY-M).